Reading from the N-terminus, the 331-residue chain is 6-phosphogluconolactonase (331 aa).

This sequence belongs to the cycloisomerase 2 family.

It catalyses the reaction 6-phospho-D-glucono-1,5-lactone + H2O = 6-phospho-D-gluconate + H(+). It participates in carbohydrate degradation; pentose phosphate pathway; D-ribulose 5-phosphate from D-glucose 6-phosphate (oxidative stage): step 2/3. Catalyzes the hydrolysis of 6-phosphogluconolactone to 6-phosphogluconate. The protein is 6-phosphogluconolactonase of Salmonella choleraesuis (strain SC-B67).